The sequence spans 576 residues: MSLSPSRIRLLDSVTVNQISAGEVIENAASVVKELIENSLDAGADEIHIETLGGGRGQIVVRDNGVGMDPEEVPVALQRHATSKIAHFADIFSLASYGFRGEALPSIASISKMEIHTARAGGLGSKTLIEKGEPVCCEPAPRQQGTTIAVHSLFYNVPMRQSFQKSPQMDRLAIRRLLENSVLSSEGIGWTWISERRQELHVAKKQGFIERVALVLGESFVQEAFFIDKQQGDLRVLGFLGSPNQHRSTRQGQRLFINNRAVESSFISKKVAEAYAWMIPAQRYPIFVLKLFLPPMWCDFNVHPQKTEVRLLQEGQISNLLVEAISEALLRRSSSLEEIVLKVPTEKIPIENEGISVPSIRPAIVSAPLSCPTFSQQPYLKTEMATIVSRDSASSSLSVVEKVRFLTSLGKVLLVEDSEGVHVVFVQAARKHLFYVSLLSERLESRLACQTFLLPPSVQMTKLEADFLQMRLEALTALGIELSRISPDSFAIESAPPFIQEEELKEWIVALAQEGALHVGESFEQLVENTVQKLVFSRNARAFDYAWLDILWKLGKPEKAFDGEMIRRLVLDDDFM.

The protein belongs to the DNA mismatch repair MutL/HexB family.

Its function is as follows. This protein is involved in the repair of mismatches in DNA. It is required for dam-dependent methyl-directed DNA mismatch repair. May act as a 'molecular matchmaker', a protein that promotes the formation of a stable complex between two or more DNA-binding proteins in an ATP-dependent manner without itself being part of a final effector complex. In Chlamydia trachomatis serovar L2 (strain ATCC VR-902B / DSM 19102 / 434/Bu), this protein is DNA mismatch repair protein MutL.